An 84-amino-acid polypeptide reads, in one-letter code: Large ribosomal subunit protein bL27 (84 aa).

A disordered region spans residues 1–22; that stretch reads MAHKKAGGSTRNGRDSESKRLG.

Belongs to the bacterial ribosomal protein bL27 family.

This is Large ribosomal subunit protein bL27 from Shewanella pealeana (strain ATCC 700345 / ANG-SQ1).